Consider the following 542-residue polypeptide: Heterogeneous nuclear ribonucleoprotein L-like (542 aa).

Residues 1-71 (MSSSSSSPRE…QPEAGGSHHK (71 aa)) form a disordered region. A compositionally biased stretch (basic and acidic residues) spans 18–29 (YESQAKRLKTEE). Lys-26 is covalently cross-linked (Glycyl lysine isopeptide (Lys-Gly) (interchain with G-Cter in SUMO2)). Ser-35 is subject to Phosphoserine. Thr-46 carries the post-translational modification Phosphothreonine. Over residues 48-58 (RGGGDGGGGGR) the composition is skewed to gly residues. Residues Ser-59, Ser-68, and Ser-75 each carry the phosphoserine modification. RRM domains lie at 76–150 (PVVH…YSTS), 166–244 (NKVL…YARP), and 335–409 (SVVM…VSKQ). Lys-491 participates in a covalent cross-link: Glycyl lysine isopeptide (Lys-Gly) (interchain with G-Cter in SUMO2).

In terms of assembly, interacts with HNRNPL. Widely expressed. Detected in bone marrow stroma cells, skeletal muscle, heart, placenta, pancreas, kidney and lung.

Its function is as follows. RNA-binding protein that functions as a regulator of alternative splicing for multiple target mRNAs, including PTPRC/CD45 and STAT5A. Required for alternative splicing of PTPRC. This is Heterogeneous nuclear ribonucleoprotein L-like (HNRNPLL) from Homo sapiens (Human).